The primary structure comprises 341 residues: MLSPEALTTAVDAAQQAIALADTLDVLARVKTEHLGDRSPLALARQALAVLPKEQRAEAGKRVNAARNAAQRSYDERLATLRAERDAAVLVAEGIDVTLPSTRVPAGARHPIIMLAEHVADTFIAMGWELAEGPEVETEQFNFDALNFPADHPARGEQDTFYIAPEDSRQLLRTHTSPVQIRTLLARELPVYIISIGRTFRTDELDATHTPIFHQVEGLAVDRGLSMAHLRGTLDAFARAEFGPSARTRIRPHFFPFTEPSAEVDVWFANKIGGADWVEWGGCGMVHPNVLRATGIDPDLYSGFAFGMGLERTLQFRNGIPDMRDMVEGDVRFSLPFGVGA.

Position 259 (Glu259) interacts with Mg(2+).

It belongs to the class-II aminoacyl-tRNA synthetase family. Phe-tRNA synthetase alpha subunit type 1 subfamily. In terms of assembly, tetramer of two alpha and two beta subunits. It depends on Mg(2+) as a cofactor.

It localises to the cytoplasm. It carries out the reaction tRNA(Phe) + L-phenylalanine + ATP = L-phenylalanyl-tRNA(Phe) + AMP + diphosphate + H(+). The polypeptide is Phenylalanine--tRNA ligase alpha subunit (Mycobacterium bovis (strain ATCC BAA-935 / AF2122/97)).